Consider the following 356-residue polypeptide: UDP-N-acetylglucosamine--N-acetylmuramyl-(pentapeptide) pyrophosphoryl-undecaprenol N-acetylglucosamine transferase (356 aa).

Residues 15–17 (TGG), N127, R163, S191, I244, 263–268 (ALTVSE), and Q288 contribute to the UDP-N-acetyl-alpha-D-glucosamine site.

It belongs to the glycosyltransferase 28 family. MurG subfamily.

Its subcellular location is the cell inner membrane. It catalyses the reaction di-trans,octa-cis-undecaprenyl diphospho-N-acetyl-alpha-D-muramoyl-L-alanyl-D-glutamyl-meso-2,6-diaminopimeloyl-D-alanyl-D-alanine + UDP-N-acetyl-alpha-D-glucosamine = di-trans,octa-cis-undecaprenyl diphospho-[N-acetyl-alpha-D-glucosaminyl-(1-&gt;4)]-N-acetyl-alpha-D-muramoyl-L-alanyl-D-glutamyl-meso-2,6-diaminopimeloyl-D-alanyl-D-alanine + UDP + H(+). It functions in the pathway cell wall biogenesis; peptidoglycan biosynthesis. Functionally, cell wall formation. Catalyzes the transfer of a GlcNAc subunit on undecaprenyl-pyrophosphoryl-MurNAc-pentapeptide (lipid intermediate I) to form undecaprenyl-pyrophosphoryl-MurNAc-(pentapeptide)GlcNAc (lipid intermediate II). The chain is UDP-N-acetylglucosamine--N-acetylmuramyl-(pentapeptide) pyrophosphoryl-undecaprenol N-acetylglucosamine transferase from Yersinia pseudotuberculosis serotype O:1b (strain IP 31758).